The chain runs to 451 residues: Signal recognition particle 54 kDa protein (451 aa).

GTP-binding positions include 105-112 (GVQGTGKT), 187-191 (DTAGR), and 247-250 (TKMD).

This sequence belongs to the GTP-binding SRP family. SRP54 subfamily. Part of the signal recognition particle protein translocation system, which is composed of SRP and FtsY. Archaeal SRP consists of a 7S RNA molecule of 300 nucleotides and two protein subunits: SRP54 and SRP19.

The protein localises to the cytoplasm. The enzyme catalyses GTP + H2O = GDP + phosphate + H(+). Its function is as follows. Involved in targeting and insertion of nascent membrane proteins into the cytoplasmic membrane. Binds to the hydrophobic signal sequence of the ribosome-nascent chain (RNC) as it emerges from the ribosomes. The SRP-RNC complex is then targeted to the cytoplasmic membrane where it interacts with the SRP receptor FtsY. The chain is Signal recognition particle 54 kDa protein from Acidianus ambivalens (Desulfurolobus ambivalens).